A 60-amino-acid polypeptide reads, in one-letter code: Mastoparan-VT6 (60 aa).

The first 27 residues, 1–27 (MKNTILILFTAFIALLGFFGMSAEALA), serve as a signal peptide directing secretion. AXPX repeat units follow at residues 27 to 30 (ADPK), 31 to 34 (ADPL), 35 to 38 (AGPN), and 41 to 44 (ADPE). A propeptide spanning residues 28–45 (DPKADPLAGPNPDADPEA) is cleaved from the precursor. Leu-59 is modified (leucine amide).

It belongs to the MCD family. Mastoparan subfamily. As to expression, expressed by the venom gland.

It is found in the secreted. Functionally, the synthetic peptide shows antimicrobial activities against Gram-negative bacteria (but not against all strains tested), Gram-positive bacteria (all strains tested) and the fungi C.albicans and C.parapsilosis. Exhibits little hemolytic activity against washed human erythrocytes. The polypeptide is Mastoparan-VT6 (Vespa tropica (Greater banded hornet)).